The following is a 238-amino-acid chain: Large ribosomal subunit protein uL2 (238 aa).

A disordered region spans residues 197–219; it reads ASDHPFGGKRHSNHSKPFTVSKW.

It belongs to the universal ribosomal protein uL2 family. Part of the 50S ribosomal subunit. Forms a bridge to the 30S subunit in the 70S ribosome.

Its function is as follows. One of the primary rRNA binding proteins. Required for association of the 30S and 50S subunits to form the 70S ribosome, for tRNA binding and peptide bond formation. It has been suggested to have peptidyltransferase activity; this is somewhat controversial. Makes several contacts with the 16S rRNA in the 70S ribosome. This is Large ribosomal subunit protein uL2 from Nanoarchaeum equitans (strain Kin4-M).